The sequence spans 412 residues: Transcription factor IIIA (412 aa).

The tract at residues 1-20 (MSESDETKSISSLISSSSSS) is disordered. The segment covering 9 to 20 (SISSLISSSSSS) has biased composition (low complexity). 7 C2H2-type zinc fingers span residues 25-49 (YICT…LRTH), 55-79 (YKCT…IVSH), 85-107 (FHCS…EITH), 111-136 (FKCT…LSVH), 140-162 (LTCK…KLKH), 169-194 (YQCD…KQSH), and 197-219 (LKCP…MLSH). The C2H2-type 8; degenerate zinc finger occupies 228 to 252 (WTCDYCDVGKFAKKNELVEHYNIFH). The interval 285 to 316 (LETEKLKVEEDEEDEEDSLDEKRSDVRSDSMS) is disordered. Residues 293–303 (EEDEEDEEDSL) are compositionally biased toward acidic residues. A C2H2-type 9 zinc finger spans residues 345–369 (INCPKNNCDRMFSREYDLRRHLKWH).

The protein resides in the nucleus. Its function is as follows. Transcription factor required for transcription of 5S rRNA by RNA polymerase III. This is Transcription factor IIIA (PZF1) from Candida albicans (strain SC5314 / ATCC MYA-2876) (Yeast).